Reading from the N-terminus, the 288-residue chain is RELT-like protein 1 (288 aa).

Positions 1–23 (MAPPAASGIPSIAPSLGPTAVWL) are cleaved as a signal peptide. The Extracellular portion of the chain corresponds to 24–57 (GNRSDLGDVQALASRDLPTTTVTAGNNNKPEHLE). N-linked (GlcNAc...) asparagine glycosylation is present at Asn25. The chain crosses the membrane as a helical span at residues 58–78 (YVAFVLVPVFFIMGLLGILIC). Over 79–288 (HVLKKKGYRC…EGTQERRSSE (210 aa)) the chain is Cytoplasmic. Disordered stretches follow at residues 145-172 (FEPE…GAAS) and 237-288 (HKSN…RSSE). A compositionally biased stretch (low complexity) spans 152–172 (SPNAPGSPTSPGSPLSPGAAS). Positions 237 to 246 (HKSNSKERKS) are enriched in basic and acidic residues.

It belongs to the RELT family.

It localises to the cell membrane. This Gallus gallus (Chicken) protein is RELT-like protein 1 (RELL1).